We begin with the raw amino-acid sequence, 867 residues long: KH domain-containing protein akap-1 (867 aa).

Residues 108-128 traverse the membrane as a helical segment; the sequence is HALLIALGGFSIAALFVWYIN. Disordered stretches follow at residues 145 to 458 and 481 to 523; these read SNGL…QKRV and HENA…GLTT. Positions 152–162 are enriched in polar residues; the sequence is ATASDVQTENG. 4 stretches are compositionally biased toward basic and acidic residues: residues 186-211, 218-239, 247-275, and 298-307; these read QQKD…DKKQ, TEKK…DHVA, SEHK…EIEV, and QFVKKEEPKL. Over residues 336 to 345 the composition is skewed to polar residues; that stretch reads TKMNDATSPL. Positions 363–383 are enriched in basic and acidic residues; it reads EMEKSFNEEEFRLNESSDIDR. Positions 397–408 are enriched in basic residues; it reads NKNRSSQKRKGG. Basic and acidic residues-rich tracts occupy residues 441 to 458 and 481 to 490; these read LTKE…QKRV and HENASYEKSD. Residues 494–507 show a composition bias toward polar residues; sequence LDSQNSEASSQDSG. The 68-residue stretch at 528-595 folds into the KH domain; sequence LPMYEFEIPN…DEINHCLQML (68 aa). The 59-residue stretch at 689–747 folds into the Tudor domain; sequence PCQNGLLCAAPVGNAWFRAVTVQYFDETDEVFVKFVDYGGYSKMARQDLRQIRTDLMSL.

The protein resides in the membrane. This is KH domain-containing protein akap-1 from Caenorhabditis elegans.